Reading from the N-terminus, the 628-residue chain is tRNA uridine 5-carboxymethylaminomethyl modification enzyme MnmG (628 aa).

13–18 (GAGHAG) provides a ligand contact to FAD. 273 to 287 (GPRYCPSIEDKIVRF) lines the NAD(+) pocket.

This sequence belongs to the MnmG family. In terms of assembly, homodimer. Heterotetramer of two MnmE and two MnmG subunits. FAD serves as cofactor.

The protein localises to the cytoplasm. Functionally, NAD-binding protein involved in the addition of a carboxymethylaminomethyl (cmnm) group at the wobble position (U34) of certain tRNAs, forming tRNA-cmnm(5)s(2)U34. In Buchnera aphidicola subsp. Acyrthosiphon pisum (strain APS) (Acyrthosiphon pisum symbiotic bacterium), this protein is tRNA uridine 5-carboxymethylaminomethyl modification enzyme MnmG.